The primary structure comprises 500 residues: GTPase Der (500 aa).

2 EngA-type G domains span residues 3–166 and 211–384; these read PVVA…MEEL and IKLA…VSAT. Residues 9–16, 56–60, 118–121, 217–224, 264–268, and 329–332 each bind GTP; these read GRPNVGKS, DTGGI, NKID, DTAGV, and NKWD. One can recognise a KH-like domain in the interval 385-469; it reads KRVGTSVLTR…PIRIQFQNSE (85 aa). The disordered stretch occupies residues 481–500; that stretch reads LSQERQRKRLVGAVKNRNKK. Positions 486-500 are enriched in basic residues; that stretch reads QRKRLVGAVKNRNKK.

This sequence belongs to the TRAFAC class TrmE-Era-EngA-EngB-Septin-like GTPase superfamily. EngA (Der) GTPase family. Associates with the 50S ribosomal subunit.

In terms of biological role, GTPase that plays an essential role in the late steps of ribosome biogenesis. The chain is GTPase Der from Aliivibrio salmonicida (strain LFI1238) (Vibrio salmonicida (strain LFI1238)).